Reading from the N-terminus, the 188-residue chain is Elongation factor P (188 aa).

It belongs to the elongation factor P family.

The protein localises to the cytoplasm. It participates in protein biosynthesis; polypeptide chain elongation. In terms of biological role, involved in peptide bond synthesis. Stimulates efficient translation and peptide-bond synthesis on native or reconstituted 70S ribosomes in vitro. Probably functions indirectly by altering the affinity of the ribosome for aminoacyl-tRNA, thus increasing their reactivity as acceptors for peptidyl transferase. The protein is Elongation factor P of Methylorubrum extorquens (strain CM4 / NCIMB 13688) (Methylobacterium extorquens).